The following is a 151-amino-acid chain: Dehydrin Rab16D (151 aa).

The tract at residues 1–138 (MEYQGQHGGH…TADAGGEKKG (138 aa)) is disordered. The span at 39 to 51 (EPAREDKKTDGVL) shows a compositional bias: basic and acidic residues. 2 stretches are compositionally biased toward low complexity: residues 90 to 105 (GNNQ…TTTG) and 117 to 132 (IATG…TADA).

The protein belongs to the plant dehydrin family.

The sequence is that of Dehydrin Rab16D (RAB16D) from Oryza sativa subsp. indica (Rice).